The following is a 144-amino-acid chain: Large ribosomal subunit protein uL13 (144 aa).

It belongs to the universal ribosomal protein uL13 family. Part of the 50S ribosomal subunit.

Its function is as follows. This protein is one of the early assembly proteins of the 50S ribosomal subunit, although it is not seen to bind rRNA by itself. It is important during the early stages of 50S assembly. This is Large ribosomal subunit protein uL13 from Nitrosomonas eutropha (strain DSM 101675 / C91 / Nm57).